The chain runs to 498 residues: Glycerol kinase (498 aa).

T12 is an ADP binding site. 3 residues coordinate ATP: T12, T13, and S14. T12 contacts sn-glycerol 3-phosphate. Position 16 (R16) interacts with ADP. Sn-glycerol 3-phosphate contacts are provided by R82, E83, and Y134. Residues R82, E83, and Y134 each coordinate glycerol. A Phosphohistidine; by HPr modification is found at H230. D244 contacts sn-glycerol 3-phosphate. Residues D244 and Q245 each contribute to the glycerol site. Residues T266 and G309 each contribute to the ADP site. The ATP site is built by T266, G309, Q313, and G410. Residues G410 and N414 each coordinate ADP.

It belongs to the FGGY kinase family. Homotetramer and homodimer (in equilibrium). The phosphoenolpyruvate-dependent sugar phosphotransferase system (PTS), including enzyme I, and histidine-containing protein (HPr) are required for the phosphorylation, which leads to the activation of the enzyme.

The catalysed reaction is glycerol + ATP = sn-glycerol 3-phosphate + ADP + H(+). It participates in polyol metabolism; glycerol degradation via glycerol kinase pathway; sn-glycerol 3-phosphate from glycerol: step 1/1. Its activity is regulated as follows. Activated by phosphorylation and inhibited by fructose 1,6-bisphosphate (FBP). Key enzyme in the regulation of glycerol uptake and metabolism. Catalyzes the phosphorylation of glycerol to yield sn-glycerol 3-phosphate. The polypeptide is Glycerol kinase (Staphylococcus aureus (strain MSSA476)).